We begin with the raw amino-acid sequence, 691 residues long: Glycine--tRNA ligase beta subunit (691 aa).

Belongs to the class-II aminoacyl-tRNA synthetase family. As to quaternary structure, tetramer of two alpha and two beta subunits.

The protein localises to the cytoplasm. It carries out the reaction tRNA(Gly) + glycine + ATP = glycyl-tRNA(Gly) + AMP + diphosphate. The polypeptide is Glycine--tRNA ligase beta subunit (Limosilactobacillus reuteri (strain DSM 20016) (Lactobacillus reuteri)).